The primary structure comprises 166 residues: Putative 4-hydroxy-4-methyl-2-oxoglutarate aldolase 1 (166 aa).

Position 2 is an N-acetylalanine (Ala-2). Substrate contacts are provided by residues 81 to 84 (GGNP) and Arg-103. Asp-104 is an a divalent metal cation binding site.

The protein belongs to the class II aldolase/RraA-like family. As to quaternary structure, homotrimer. The cofactor is a divalent metal cation.

The catalysed reaction is 4-hydroxy-4-methyl-2-oxoglutarate = 2 pyruvate. The enzyme catalyses oxaloacetate + H(+) = pyruvate + CO2. Functionally, catalyzes the aldol cleavage of 4-hydroxy-4-methyl-2-oxoglutarate (HMG) into 2 molecules of pyruvate. Also contains a secondary oxaloacetate (OAA) decarboxylase activity due to the common pyruvate enolate transition state formed following C-C bond cleavage in the retro-aldol and decarboxylation reactions. The protein is Putative 4-hydroxy-4-methyl-2-oxoglutarate aldolase 1 of Arabidopsis thaliana (Mouse-ear cress).